Reading from the N-terminus, the 473-residue chain is Glutamate--tRNA ligase (473 aa).

The 'HIGH' region motif lies at 11–21; that stretch reads PSPTGFLHIGG. A 'KMSKS' region motif is present at residues 240–244; it reads KLSKR. Lysine 243 contacts ATP.

The protein belongs to the class-I aminoacyl-tRNA synthetase family. Glutamate--tRNA ligase type 1 subfamily. Monomer.

Its subcellular location is the cytoplasm. It carries out the reaction tRNA(Glu) + L-glutamate + ATP = L-glutamyl-tRNA(Glu) + AMP + diphosphate. Its function is as follows. Catalyzes the attachment of glutamate to tRNA(Glu) in a two-step reaction: glutamate is first activated by ATP to form Glu-AMP and then transferred to the acceptor end of tRNA(Glu). In Afipia carboxidovorans (strain ATCC 49405 / DSM 1227 / KCTC 32145 / OM5) (Oligotropha carboxidovorans), this protein is Glutamate--tRNA ligase.